Consider the following 317-residue polypeptide: Beta-ketoacyl-[acyl-carrier-protein] synthase III (317 aa).

Residues cysteine 112 and histidine 244 contribute to the active site. Residues 245–249 are ACP-binding; the sequence is QANLR. The active site involves asparagine 274.

It belongs to the thiolase-like superfamily. FabH family. In terms of assembly, homodimer.

It localises to the cytoplasm. The catalysed reaction is malonyl-[ACP] + acetyl-CoA + H(+) = 3-oxobutanoyl-[ACP] + CO2 + CoA. It functions in the pathway lipid metabolism; fatty acid biosynthesis. Its function is as follows. Catalyzes the condensation reaction of fatty acid synthesis by the addition to an acyl acceptor of two carbons from malonyl-ACP. Catalyzes the first condensation reaction which initiates fatty acid synthesis and may therefore play a role in governing the total rate of fatty acid production. Possesses both acetoacetyl-ACP synthase and acetyl transacylase activities. Its substrate specificity determines the biosynthesis of branched-chain and/or straight-chain of fatty acids. This is Beta-ketoacyl-[acyl-carrier-protein] synthase III from Blochmanniella pennsylvanica (strain BPEN).